We begin with the raw amino-acid sequence, 345 residues long: tRNA N6-adenosine threonylcarbamoyltransferase (345 aa).

Fe cation contacts are provided by H111 and H115. Substrate contacts are provided by residues L134 to G138, D167, G180, and N276. Fe cation is bound at residue D304.

This sequence belongs to the KAE1 / TsaD family. Fe(2+) serves as cofactor.

The protein localises to the cytoplasm. It carries out the reaction L-threonylcarbamoyladenylate + adenosine(37) in tRNA = N(6)-L-threonylcarbamoyladenosine(37) in tRNA + AMP + H(+). Functionally, required for the formation of a threonylcarbamoyl group on adenosine at position 37 (t(6)A37) in tRNAs that read codons beginning with adenine. Is involved in the transfer of the threonylcarbamoyl moiety of threonylcarbamoyl-AMP (TC-AMP) to the N6 group of A37, together with TsaE and TsaB. TsaD likely plays a direct catalytic role in this reaction. The chain is tRNA N6-adenosine threonylcarbamoyltransferase from Bordetella avium (strain 197N).